Here is a 63-residue protein sequence, read N- to C-terminus: Putative ankyrin repeat protein RF_p14 (63 aa).

ANK repeat units lie at residues 11–43 (KLNQ…CRDH) and 44–63 (QGDT…ILDI).

The polypeptide is Putative ankyrin repeat protein RF_p14 (Rickettsia felis (strain ATCC VR-1525 / URRWXCal2) (Rickettsia azadi)).